The sequence spans 89 residues: RNA-binding protein Hfq (89 aa).

In terms of domain architecture, Sm spans 14–73 (DPYLNALRKEKINVAIYLVNGVKLQGRVDSFDQFVVLLRSNVTQMVYKHAISTIVPARDP).

It belongs to the Hfq family. Homohexamer.

Functionally, RNA chaperone that binds small regulatory RNA (sRNAs) and mRNAs to facilitate mRNA translational regulation in response to envelope stress, environmental stress and changes in metabolite concentrations. Also binds with high specificity to tRNAs. This Hydrogenovibrio crunogenus (strain DSM 25203 / XCL-2) (Thiomicrospira crunogena) protein is RNA-binding protein Hfq.